Reading from the N-terminus, the 642-residue chain is Chaperone protein DnaK (642 aa).

Phosphothreonine; by autocatalysis is present on Thr198. The tract at residues 602–642 is disordered; the sequence is AYAKMTEKQQSDDGAGTQNADHKEDDVVDADFEEVKSDKKD.

This sequence belongs to the heat shock protein 70 family.

Functionally, acts as a chaperone. In Dichelobacter nodosus (strain VCS1703A), this protein is Chaperone protein DnaK.